A 257-amino-acid chain; its full sequence is UPF0246 protein A1S_2267 (257 aa).

This sequence belongs to the UPF0246 family.

The chain is UPF0246 protein A1S_2267 from Acinetobacter baumannii (strain ATCC 17978 / DSM 105126 / CIP 53.77 / LMG 1025 / NCDC KC755 / 5377).